A 340-amino-acid polypeptide reads, in one-letter code: tRNA N6-adenosine threonylcarbamoyltransferase (340 aa).

2 residues coordinate Fe cation: His-113 and His-117. Substrate contacts are provided by residues 135-139, Asp-169, Gly-182, Asp-186, and Asn-274; that span reads LVSGG. Residue Asp-302 coordinates Fe cation.

This sequence belongs to the KAE1 / TsaD family. Requires Fe(2+) as cofactor.

It localises to the cytoplasm. The enzyme catalyses L-threonylcarbamoyladenylate + adenosine(37) in tRNA = N(6)-L-threonylcarbamoyladenosine(37) in tRNA + AMP + H(+). In terms of biological role, required for the formation of a threonylcarbamoyl group on adenosine at position 37 (t(6)A37) in tRNAs that read codons beginning with adenine. Is involved in the transfer of the threonylcarbamoyl moiety of threonylcarbamoyl-AMP (TC-AMP) to the N6 group of A37, together with TsaE and TsaB. TsaD likely plays a direct catalytic role in this reaction. The protein is tRNA N6-adenosine threonylcarbamoyltransferase of Mycolicibacterium smegmatis (strain ATCC 700084 / mc(2)155) (Mycobacterium smegmatis).